The primary structure comprises 545 residues: Probable intron-encoded endonuclease 4 (545 aa).

7 consecutive transmembrane segments (helical) span residues 1-21, 30-50, 81-101, 119-139, 140-160, 177-197, and 200-220; these read MYLS…FFGR, LITC…FFEV, LTVA…IYSI, LFTF…MFVG, WEGV…RIAA, FLTI…YATV, and LAPY…LIGA. The segment at 1 to 239 is ndh-5 exons 1 and 2 encoded; it reads MYLSIIILPL…HVWLPMAMEG (239 aa). Residues 240-545 form a ndh-5 intron 2 encoded region; it reads FFSRAFLKLH…NNINKSDYNK (306 aa).

In the N-terminal section; belongs to the complex I subunit 5 family. The protein in the C-terminal section; belongs to the LAGLIDADG endonuclease family.

It is found in the mitochondrion membrane. Its function is as follows. Mitochondrial DNA endonuclease involved in intron homing. The polypeptide is Probable intron-encoded endonuclease 4 (Neurospora crassa (strain ATCC 24698 / 74-OR23-1A / CBS 708.71 / DSM 1257 / FGSC 987)).